A 547-amino-acid polypeptide reads, in one-letter code: Beta,beta-carotene 15,15'-dioxygenase (547 aa).

The Fe cation site is built by His-172, His-237, His-308, and His-514. Residues 528–540 (QAASEEQRDRASD) are compositionally biased toward basic and acidic residues. The interval 528-547 (QAASEEQRDRASDCHGAPLT) is disordered.

The protein belongs to the carotenoid oxygenase family. It depends on Fe(2+) as a cofactor. Highly expressed in retinal pigment epithelium. Also expressed in kidney, testis, liver, brain, small intestine and colon.

It is found in the cytoplasm. The protein resides in the cytosol. It carries out the reaction all-trans-beta-carotene + O2 = 2 all-trans-retinal. The protein operates within cofactor metabolism; retinol metabolism. Functionally, symmetrically cleaves beta-carotene into two molecules of retinal using a dioxygenase mechanism. The protein is Beta,beta-carotene 15,15'-dioxygenase of Homo sapiens (Human).